The sequence spans 114 residues: C-X-C motif chemokine 6 (114 aa).

The N-terminal stretch at 1–37 (MSLPSSRAARVPGPSGSLCALLALLLLLTPPGPLASA) is a signal peptide. 2 cysteine pairs are disulfide-bonded: Cys-49-Cys-75 and Cys-51-Cys-91.

It belongs to the intercrine alpha (chemokine CxC) family.

The protein resides in the secreted. Its function is as follows. Chemotactic for neutrophil granulocytes. Signals through binding and activation of its receptors (CXCR1 and CXCR2). In addition to its chemotactic and angiogenic properties, it has strong antibacterial activity against Gram-positive and Gram-negative bacteria (90-fold-higher when compared to CXCL5 and CXCL7). The sequence is that of C-X-C motif chemokine 6 (CXCL6) from Homo sapiens (Human).